A 537-amino-acid chain; its full sequence is Cytochrome P450 4F6 (537 aa).

Residue Cys468 coordinates heme.

Belongs to the cytochrome P450 family. The cofactor is heme. As to expression, high expression in liver and kidney. Lower expression in brain.

The protein resides in the endoplasmic reticulum membrane. Its subcellular location is the microsome membrane. The enzyme catalyses an organic molecule + reduced [NADPH--hemoprotein reductase] + O2 = an alcohol + oxidized [NADPH--hemoprotein reductase] + H2O + H(+). The sequence is that of Cytochrome P450 4F6 (Cyp4f6) from Rattus norvegicus (Rat).